We begin with the raw amino-acid sequence, 297 residues long: Protein CANDIDATE G-PROTEIN COUPLED RECEPTOR 8 (297 aa).

N-linked (GlcNAc...) asparagine glycosylation occurs at Asn20. A run of 7 helical transmembrane segments spans residues 34–54, 70–90, 107–127, 142–162, 180–200, 215–235, and 242–262; these read GFLH…YLAY, IMIA…AWCC, LTLF…AFLF, FLIS…FLFG, WGLW…VFLM, FYNY…ASAF, and FGFW…LPLL.

The protein belongs to the UPF0359 family.

It is found in the membrane. In terms of biological role, G-protein coupled receptor. Plays a role in plants and microbes interactions. In Arabidopsis thaliana (Mouse-ear cress), this protein is Protein CANDIDATE G-PROTEIN COUPLED RECEPTOR 8.